The primary structure comprises 367 residues: Alanine racemase (367 aa).

Catalysis depends on lysine 40, which acts as the Proton acceptor; specific for D-alanine. At lysine 40 the chain carries N6-(pyridoxal phosphate)lysine. Arginine 136 contributes to the substrate binding site. The active-site Proton acceptor; specific for L-alanine is the tyrosine 263. Methionine 310 is a binding site for substrate.

It belongs to the alanine racemase family. The cofactor is pyridoxal 5'-phosphate.

It carries out the reaction L-alanine = D-alanine. Its pathway is amino-acid biosynthesis; D-alanine biosynthesis; D-alanine from L-alanine: step 1/1. Its function is as follows. Catalyzes the interconversion of L-alanine and D-alanine. May also act on other amino acids. This chain is Alanine racemase (alr), found in Streptococcus suis (strain 98HAH33).